A 98-amino-acid polypeptide reads, in one-letter code: DNA-binding protein Fis (98 aa).

Positions 74-93 (QTRAALMLGINRSTLRKKLK) form a DNA-binding region, H-T-H motif.

It belongs to the transcriptional regulatory Fis family. Homodimer.

Activates ribosomal RNA transcription. Plays a direct role in upstream activation of rRNA promoters. This chain is DNA-binding protein Fis, found in Buchnera aphidicola subsp. Acyrthosiphon pisum (strain 5A).